The chain runs to 1273 residues: Homeobox protein cut-like ceh-44 (1273 aa).

Coiled coils occupy residues 101 to 407 and 440 to 468; these read LLKG…DGFK and RQKNTDSELIEKIQEAKRNKAVCELKFED. 3 DNA-binding regions (CUT) span residues 591–681, 832–919, and 978–1065; these read NVQA…LSPR, QAQY…KQPK, and IDES…KEES. The segment at 1069 to 1100 is disordered; it reads VKAKIESVPAPREAPRPVKRKHSSDTDDYDLN. The homeobox DNA-binding region spans 1103–1162; sequence KPIQRTVITDYQKDTLRFVFVNEQHPSNELCEQISLKLDMSLRTVQNWFHNHRTRSKARE.

The protein belongs to the CUT homeobox family.

Its subcellular location is the nucleus. Probable DNA-binding regulatory protein involved in cell-fate specification. This Caenorhabditis elegans protein is Homeobox protein cut-like ceh-44.